The primary structure comprises 400 residues: Enolase (400 aa).

Gln-154 serves as a coordination point for (2R)-2-phosphoglycerate. Glu-197 functions as the Proton donor in the catalytic mechanism. The Mg(2+) site is built by Asp-233, Glu-274, and Asp-301. 4 residues coordinate (2R)-2-phosphoglycerate: Lys-326, Arg-355, Ser-356, and Lys-377. Lys-326 acts as the Proton acceptor in catalysis.

It belongs to the enolase family. Mg(2+) is required as a cofactor.

The protein resides in the cytoplasm. It is found in the secreted. Its subcellular location is the cell surface. The catalysed reaction is (2R)-2-phosphoglycerate = phosphoenolpyruvate + H2O. The protein operates within carbohydrate degradation; glycolysis; pyruvate from D-glyceraldehyde 3-phosphate: step 4/5. In terms of biological role, catalyzes the reversible conversion of 2-phosphoglycerate (2-PG) into phosphoenolpyruvate (PEP). It is essential for the degradation of carbohydrates via glycolysis. The polypeptide is Enolase (Picrophilus torridus (strain ATCC 700027 / DSM 9790 / JCM 10055 / NBRC 100828 / KAW 2/3)).